Here is a 78-residue protein sequence, read N- to C-terminus: MTLVTFIENLTSTVTEIGWSLFILAWAIGWALRGSPIPIFRIKRGGQDLLEDAIIAAFFLAIGSTIFYLISYIASQVS.

A run of 2 helical transmembrane segments spans residues 12–32 (STVTEIGWSLFILAWAIGWAL) and 53–73 (AIIAAFFLAIGSTIFYLISYI).

Forms a complex composed of CedA, CedA1 and CedA2.

The protein resides in the cell membrane. Part of the Ced system, which is involved in DNA import. This Sulfolobus acidocaldarius (strain ATCC 33909 / DSM 639 / JCM 8929 / NBRC 15157 / NCIMB 11770) protein is DNA import protein CedA1.